The chain runs to 344 residues: Protein pelota homolog (344 aa).

This sequence belongs to the eukaryotic release factor 1 family. Pelota subfamily. As to quaternary structure, monomer. The cofactor is a divalent metal cation.

It localises to the cytoplasm. May function in recognizing stalled ribosomes, interact with stem-loop structures in stalled mRNA molecules, and effect endonucleolytic cleavage of the mRNA. May play a role in the release non-functional ribosomes and degradation of damaged mRNAs. Has endoribonuclease activity. In Saccharolobus islandicus (strain M.16.27) (Sulfolobus islandicus), this protein is Protein pelota homolog.